Consider the following 420-residue polypeptide: Tyrosine--tRNA ligase (420 aa).

Residue Tyr33 coordinates L-tyrosine. Residues 38–47 (PTADSLHIGH) carry the 'HIGH' region motif. Residues Tyr168 and Gln172 each contribute to the L-tyrosine site. The 'KMSKS' region motif lies at 231 to 235 (KFGKT). Lys234 serves as a coordination point for ATP. In terms of domain architecture, S4 RNA-binding spans 353–419 (MLLVDALIKV…GKKNYYLVKL (67 aa)).

This sequence belongs to the class-I aminoacyl-tRNA synthetase family. TyrS type 1 subfamily. As to quaternary structure, homodimer.

It localises to the cytoplasm. The enzyme catalyses tRNA(Tyr) + L-tyrosine + ATP = L-tyrosyl-tRNA(Tyr) + AMP + diphosphate + H(+). Its function is as follows. Catalyzes the attachment of tyrosine to tRNA(Tyr) in a two-step reaction: tyrosine is first activated by ATP to form Tyr-AMP and then transferred to the acceptor end of tRNA(Tyr). This is Tyrosine--tRNA ligase from Desulfitobacterium hafniense (strain DSM 10664 / DCB-2).